We begin with the raw amino-acid sequence, 676 residues long: Pentatricopeptide repeat-containing protein ATP4 homolog, chloroplastic (676 aa).

The transit peptide at 1 to 73 (MASPSSLLSW…NSPRAAGLAR (73 aa)) directs the protein to the chloroplast. The disordered stretch occupies residues 17–58 (LSFQPKNPSPSPATARVSVQDPPPPPSDANPSPGRSSNTSRY). PPR repeat units follow at residues 148–182 (EVIL…GVQP), 183–217 (DNAT…GCSP), 218–252 (DMLT…KWQL), 253–287 (DPVI…GVKP), 288–322 (NLVV…EAVP), 323–353 (NKAT…MKDE), 358–388 (DVVL…MKAS), 396–430 (DSWS…GFKP), 431–465 (NIFI…GITP), and 532–566 (RMPY…GIYS). In terms of domain architecture, Smr spans 578 to 662 (LHLRGLSVGA…WFLTTSVAAR (85 aa)).

The protein belongs to the PPR family. P subfamily.

The protein resides in the plastid. Its subcellular location is the chloroplast. In terms of biological role, involved in translation and accumulation of chloroplast ATP synthase subunits. The chain is Pentatricopeptide repeat-containing protein ATP4 homolog, chloroplastic from Oryza sativa subsp. japonica (Rice).